A 102-amino-acid polypeptide reads, in one-letter code: Large ribosomal subunit protein bL21 (102 aa).

It belongs to the bacterial ribosomal protein bL21 family. As to quaternary structure, part of the 50S ribosomal subunit. Contacts protein L20.

Functionally, this protein binds to 23S rRNA in the presence of protein L20. The sequence is that of Large ribosomal subunit protein bL21 from Trichlorobacter lovleyi (strain ATCC BAA-1151 / DSM 17278 / SZ) (Geobacter lovleyi).